A 146-amino-acid polypeptide reads, in one-letter code: Snaclec 4 (146 aa).

Positions 1-23 (MGRFISISFGLLVVFLSLSGTEA) are cleaved as a signal peptide. 3 cysteine pairs are disulfide-bonded: Cys-27/Cys-38, Cys-55/Cys-144, and Cys-121/Cys-136. Residues 34–145 (YDQNCYKVFT…CNFIAPVVCK (112 aa)) form the C-type lectin domain.

This sequence belongs to the snaclec family. In terms of assembly, heterodimer; disulfide-linked.

Its subcellular location is the secreted. In terms of biological role, interferes with one step of hemostasis (modulation of platelet aggregation, or coagulation cascade, for example). The polypeptide is Snaclec 4 (Daboia siamensis (Eastern Russel's viper)).